The primary structure comprises 1327 residues: Polarized growth protein L1 (1327 aa).

Positions 1-30 (MRESFASLLATGAGKLALSLLFAATPFTSA) are cleaved as a signal peptide. Over 31-1169 (YTFNQVPSPN…FSQQNGKHLA (1139 aa)) the chain is Extracellular. Asparagine 74, asparagine 90, asparagine 105, asparagine 115, asparagine 132, asparagine 170, asparagine 217, asparagine 224, asparagine 235, asparagine 318, asparagine 342, asparagine 452, asparagine 475, asparagine 601, asparagine 639, asparagine 648, and asparagine 691 each carry an N-linked (GlcNAc...) asparagine glycan. Residues 595–641 (NLYVAGNFSNNDGRNNIFSFKQGASDPTALPNRGLNRQVMTLYQNDS) form a Kelch 1 repeat. The stretch at 699–754 (QVLAVSGFFDSVNEFNGNPSTNVQDFAVWVPSRSNWLHNLDFFTLAMSGRLMTFAD) is one Kelch 2 repeat. N-linked (GlcNAc...) asparagine glycans are attached at residues asparagine 835, asparagine 852, asparagine 877, and asparagine 931. Kelch repeat units lie at residues 945–993 (DVFV…ISDT) and 994–1040 (QMYI…TIAN). N-linked (GlcNAc...) asparagine glycosylation is found at asparagine 1000, asparagine 1006, and asparagine 1126. Residues 1170–1190 (LWAIVLIGLAIALVLTFLLVV) form a helical membrane-spanning segment. The Cytoplasmic segment spans residues 1191-1327 (AGILLEWYRN…VFDTILACSS (137 aa)).

It belongs to the RAX2 family.

It is found in the cell membrane. Functionally, has been identified within the cluster that mediates the biosynthesis of squalestatin, but as its expression does not follow that of the other cluster members and it is not conserved in close related clusters, L1 seems not to be involved in the biosynthesis of squalestatin. Probably plays a role as a cell polarity regulator. In Phoma sp. (strain ATCC 20986 / MF5453), this protein is Polarized growth protein L1.